The following is a 129-amino-acid chain: Transcriptional activator protein (129 aa).

The span at 1–12 (MRSSSPSQPPSI) shows a compositional bias: low complexity. The segment at 1–23 (MRSSSPSQPPSIKKAHRQAKKRA) is disordered. A compositionally biased stretch (basic residues) spans 13–23 (KKAHRQAKKRA). The short motif at 13–28 (KKAHRQAKKRAIRRRR) is the Nuclear localization signal element. A zinc finger spans residues 33–50 (CGCSIYFHIDCAGHGFTH). Residues 73-117 (LFQDKPSRGHAIHQDQDIQRPNPVQPQPQESIGSPQSIPELPSLD) form a disordered region. Residues 99 to 109 (QPQESIGSPQS) are compositionally biased toward polar residues. The transactivation stretch occupies residues 115–129 (SLDDIDDSFWVELFS).

The protein belongs to the geminiviridae transcriptional activator protein family. As to quaternary structure, monomer. Homodimer. Homooligomer. Self-interaction correlates with nuclear localization and efficient activation of transcription. Monomers suppress local silencing by interacting with and inactivating host adenosine kinase 2 (ADK2) in the cytoplasm. Interacts with and inhibits host SNF1 kinase. Binds to ssDNA. Phosphorylated.

The protein resides in the host nucleus. It localises to the host cytoplasm. Its function is as follows. Strong activator of the late viral genes promoters. Enhances the expression of the capsid protein and nuclear shuttle protein. Acts as a suppressor of RNA-mediated gene silencing, also known as post-transcriptional gene silencing (PTGS), a mechanism of plant viral defense that limits the accumulation of viral RNAs. Suppresses the host RNA silencing by inhibiting adenosine kinase 2 (ADK2), a kinase involved in a general methylation pathway. Also suppresses the host basal defense by interacting with and inhibiting SNF1 kinase, a key regulator of cell metabolism implicated in innate antiviral defense. Determines pathogenicity. This is Transcriptional activator protein from Solanum tuberosum (Potato).